The following is a 393-amino-acid chain: Interleukin-1 receptor type 2 (393 aa).

The N-terminal stretch at 1–13 is a signal peptide; it reads MFRLYVLVMGVSA. At 14–347 the chain is on the extracellular side; that stretch reads FTLQPAAHTG…RTTVKEPPPT (334 aa). 3 disulfides stabilise this stretch: C28/C116, C50/C108, and C152/C207. Ig-like C2-type domains are found at residues 29-120, 134-221, and 237-342; these read PVRG…DKVS, PFIS…YNIT, and PVII…TTVK. Residues N66, N72, and N112 are each glycosylated (N-linked (GlcNAc...) asparagine). N-linked (GlcNAc...) asparagine glycosylation is found at N219 and N277. The cysteines at positions 258 and 326 are disulfide-linked. A helical transmembrane segment spans residues 348–368; sequence FSWGIVLAPLALAFLVLGGIW. The Cytoplasmic segment spans residues 369-393; sequence MHRRCKHRTGKADGLTVLRPHHQDF.

Belongs to the interleukin-1 receptor family. Forms a non-signaling receptor complex consisting of IL1R2 and IL1RAP. A soluble form (sIL1R2) can also be produced by proteolytic cleavage at the cell surface (shedding) involving a metalloproteinase.

It localises to the secreted. It is found in the cell membrane. Non-signaling receptor for IL1A, IL1B and IL1RN. Reduces IL1B activities. Serves as a decoy receptor by competitive binding to IL1B and preventing its binding to IL1R1. Also modulates cellular response through non-signaling association with IL1RAP after binding to IL1B. IL1R2 (membrane and secreted forms) preferentially binds IL1B and poorly IL1A and IL1RN. The secreted IL1R2 recruits secreted IL1RAP with high affinity; this complex formation may be the dominant mechanism for neutralization of IL1B by secreted/soluble receptors. The polypeptide is Interleukin-1 receptor type 2 (IL1R2) (Chlorocebus aethiops (Green monkey)).